The chain runs to 146 residues: uncharacterized protein (146 aa).

Residues 6–26 traverse the membrane as a helical segment; sequence IPIFVISLSNISHIILAIFFF.

Its subcellular location is the membrane. This is an uncharacterized protein from Caenorhabditis elegans.